We begin with the raw amino-acid sequence, 444 residues long: Argininosuccinate synthase (444 aa).

Residues 18-26 (AFSGGLDTS) and Ala-44 each bind ATP. Tyr-100 provides a ligand contact to L-citrulline. Residues Gly-130 and Thr-132 each coordinate ATP. The L-aspartate site is built by Thr-132, Asn-136, and Asp-137. An L-citrulline-binding site is contributed by Asn-136. Asp-137 is an ATP binding site. L-citrulline-binding residues include Arg-140 and Ser-193. Asp-195 contacts ATP. L-citrulline is bound by residues Thr-202, Glu-204, and Glu-281.

Belongs to the argininosuccinate synthase family. Type 2 subfamily. In terms of assembly, homotetramer.

It localises to the cytoplasm. The enzyme catalyses L-citrulline + L-aspartate + ATP = 2-(N(omega)-L-arginino)succinate + AMP + diphosphate + H(+). Its pathway is amino-acid biosynthesis; L-arginine biosynthesis; L-arginine from L-ornithine and carbamoyl phosphate: step 2/3. This Mannheimia succiniciproducens (strain KCTC 0769BP / MBEL55E) protein is Argininosuccinate synthase.